Reading from the N-terminus, the 984-residue chain is Hyaluronate lyase (984 aa).

3 stretches are compositionally biased toward polar residues: residues 1–12, 19–32, and 54–66; these read MKQVVDNQTQNK, DFNQ…SWSH, and IQRT…SLSS. 2 disordered regions span residues 1-32 and 49-68; these read MKQV…SWSH and DKSP…SSDK. The N-terminal stretch at 1–40 is a signal peptide; it reads MKQVVDNQTQNKELVKNGDFNQTNPVSGSWSHTSAREWSA. Residues N429, H479, and Y488 contribute to the active site. Basic and acidic residues predominate over residues 701 to 726; sequence TEKDAKREDTTKEFMSKHSKDAKEKT. The segment at 701 to 728 is disordered; that stretch reads TEKDAKREDTTKEFMSKHSKDAKEKTGQ.

It belongs to the polysaccharide lyase 8 family.

It localises to the secreted. The catalysed reaction is [hyaluronan](n) = n 3-(4-deoxy-beta-D-gluc-4-enuronosyl)-N-acetyl-D-glucosamine + H2O. This is Hyaluronate lyase from Streptococcus agalactiae serotype III (strain NEM316).